Consider the following 308-residue polypeptide: Acetyl-coenzyme A carboxylase carboxyl transferase subunit alpha (308 aa).

Residues 36–286 form the CoA carboxyltransferase C-terminal domain; the sequence is ELEKEVSSVY…ESYFLKAFEE (251 aa).

Belongs to the AccA family. Acetyl-CoA carboxylase is a heterohexamer composed of biotin carboxyl carrier protein (AccB), biotin carboxylase (AccC) and two subunits each of ACCase subunit alpha (AccA) and ACCase subunit beta (AccD).

It is found in the cytoplasm. The enzyme catalyses N(6)-carboxybiotinyl-L-lysyl-[protein] + acetyl-CoA = N(6)-biotinyl-L-lysyl-[protein] + malonyl-CoA. The protein operates within lipid metabolism; malonyl-CoA biosynthesis; malonyl-CoA from acetyl-CoA: step 1/1. In terms of biological role, component of the acetyl coenzyme A carboxylase (ACC) complex. First, biotin carboxylase catalyzes the carboxylation of biotin on its carrier protein (BCCP) and then the CO(2) group is transferred by the carboxyltransferase to acetyl-CoA to form malonyl-CoA. This is Acetyl-coenzyme A carboxylase carboxyl transferase subunit alpha from Helicobacter hepaticus (strain ATCC 51449 / 3B1).